Reading from the N-terminus, the 130-residue chain is Small ribosomal subunit protein uS11 (130 aa).

Belongs to the universal ribosomal protein uS11 family. Part of the 30S ribosomal subunit. Interacts with proteins S7 and S18. Binds to IF-3.

Located on the platform of the 30S subunit, it bridges several disparate RNA helices of the 16S rRNA. Forms part of the Shine-Dalgarno cleft in the 70S ribosome. This chain is Small ribosomal subunit protein uS11, found in Xylella fastidiosa (strain 9a5c).